Reading from the N-terminus, the 1089-residue chain is TBC1 domain family member 31 (1089 aa).

7 WD repeats span residues 33–74, 75–116, 117–157, 158–200, 201–248, 249–296, and 297–334; these read HVDA…LNRN, RFDL…AGAK, ELVS…LDTF, QRKR…SDTL, ACKY…SKQL, FRII…IQTC, and KLVFDIGNPDNRVVTSSVSPNGRYITSVMENGSLNIYS. Residues 355–383 are disordered; that stretch reads LSKDKDSTGNKSGVSRASQEKVRVSSGRT. One can recognise a Rab-GAP TBC domain in the interval 432 to 607; the sequence is EYPAKYRMFI…RLFDNVFSNH (176 aa). Coiled-coil stretches lie at residues 698–852, 892–951, and 1050–1077; these read QERE…AVTQ, LAKA…ETRK, and GELERGERALISEVRELRQKLASQAHKK.

The protein localises to the cytoplasm. It is found in the cytoskeleton. Its subcellular location is the microtubule organizing center. The protein resides in the centrosome. It localises to the centriolar satellite. The protein localises to the cilium basal body. In terms of biological role, molecular adapter which is involved in cilium biogenesis. Part of a functional complex including OFD1 a centriolar protein involved in cilium assembly. Could regulate the cAMP-dependent phosphorylation of OFD1, and its subsequent ubiquitination by PJA2 which ultimately leads to its proteasomal degradation. The chain is TBC1 domain family member 31 from Xenopus laevis (African clawed frog).